A 93-amino-acid polypeptide reads, in one-letter code: SH3 domain-binding glutamic acid-rich-like protein 3 (93 aa).

Ser-2 carries the N-acetylserine modification. The region spanning 2-93 (SGLRVYSTSV…DTLQEFLKLA (92 aa)) is the Glutaredoxin domain. O-linked (GalNAc...) threonine glycosylation occurs at Thr-9.

It belongs to the SH3BGR family. As to quaternary structure, homodimer. Interacts with MYO1C (via its IQ motifs); the interaction is dependent on calcium and takes place at membrane ruffles. May be glycosylated.

It localises to the cytoplasm. The protein localises to the cytosol. The protein resides in the cell projection. It is found in the ruffle membrane. Its subcellular location is the nucleus. Functionally, could act as a modulator of glutaredoxin biological activity. May play a role in cytoskeleton organization. The protein is SH3 domain-binding glutamic acid-rich-like protein 3 (Sh3bgrl3) of Mus musculus (Mouse).